The sequence spans 160 residues: Ribosomal RNA large subunit methyltransferase H (160 aa).

S-adenosyl-L-methionine contacts are provided by residues L76, G108, and 127-132 (FGRMTF).

Belongs to the RNA methyltransferase RlmH family. Homodimer.

It is found in the cytoplasm. It carries out the reaction pseudouridine(1915) in 23S rRNA + S-adenosyl-L-methionine = N(3)-methylpseudouridine(1915) in 23S rRNA + S-adenosyl-L-homocysteine + H(+). Specifically methylates the pseudouridine at position 1915 (m3Psi1915) in 23S rRNA. This is Ribosomal RNA large subunit methyltransferase H from Methylocella silvestris (strain DSM 15510 / CIP 108128 / LMG 27833 / NCIMB 13906 / BL2).